Reading from the N-terminus, the 360-residue chain is Protein Wnt-2 (360 aa).

Residues 1–25 form the signal peptide; it reads MNAPLGGIWLWLPLLLTWLTPEVNS. Intrachain disulfides connect C76–C87, C127–C135, C137–C157, C206–C220, C208–C215, C278–C309, C294–C304, C308–C348, C324–C339, C326–C336, and C331–C332. S212 carries O-palmitoleoyl serine; by PORCN lipidation. An N-linked (GlcNAc...) asparagine glycan is attached at N295.

Belongs to the Wnt family. In terms of processing, palmitoleoylation is required for efficient binding to frizzled receptors. Depalmitoleoylation leads to Wnt signaling pathway inhibition.

Its subcellular location is the secreted. The protein localises to the extracellular space. It localises to the extracellular matrix. Functionally, ligand for members of the frizzled family of seven transmembrane receptors. Functions in the canonical Wnt signaling pathway that results in activation of transcription factors of the TCF/LEF family. Functions as a upstream regulator of FGF10 expression. Plays an important role in embryonic lung development. May contribute to embryonic brain development by regulating the proliferation of dopaminergic precursors and neurons. In Gorilla gorilla gorilla (Western lowland gorilla), this protein is Protein Wnt-2 (WNT2).